Reading from the N-terminus, the 241-residue chain is Triosephosphate isomerase (241 aa).

9–11 (NWK) is a binding site for substrate. The active-site Electrophile is His96. Glu165 (proton acceptor) is an active-site residue. Substrate-binding positions include Gly171, Ser204, and 225–226 (GG).

This sequence belongs to the triosephosphate isomerase family. As to quaternary structure, homodimer.

The protein localises to the cytoplasm. It carries out the reaction D-glyceraldehyde 3-phosphate = dihydroxyacetone phosphate. It functions in the pathway carbohydrate biosynthesis; gluconeogenesis. Its pathway is carbohydrate degradation; glycolysis; D-glyceraldehyde 3-phosphate from glycerone phosphate: step 1/1. Its function is as follows. Involved in the gluconeogenesis. Catalyzes stereospecifically the conversion of dihydroxyacetone phosphate (DHAP) to D-glyceraldehyde-3-phosphate (G3P). The polypeptide is Triosephosphate isomerase (Acaryochloris marina (strain MBIC 11017)).